A 151-amino-acid polypeptide reads, in one-letter code: Cytochrome c oxidase subunit 5B, mitochondrial (151 aa).

A mitochondrion-targeting transit peptide spans 1-17 (MLRTSLTKGARLTGTRF). The Mitochondrial matrix segment spans residues 18–85 (VQTKALSKAT…EWGPRRPVHG (68 aa)). The helical transmembrane segment at 86-108 (KGDVAFITKGVFLGLGISFGLFG) threads the bilayer. Topologically, residues 109-151 (LVRLLANPETPKTMNREWQLKSDEYLKSKNANPWGGYSQVQSK) are mitochondrial intermembrane.

The protein belongs to the cytochrome c oxidase IV family. Component of the cytochrome c oxidase (complex IV, CIV), a multisubunit enzyme composed of 12 subunits. The complex is composed of a catalytic core of 3 subunits COX1, COX2 and COX3, encoded in the mitochondrial DNA, and 9 supernumerary subunits COX4, COX5A (or COX5B), COX6, COX7, COX8, COX9, COX12, COX13 and COX26, which are encoded in the nuclear genome. COX5A is the predominant subunit V during aerobic/normoxic growth, it gets replaced by COX5B under anaerobic/hypoxic conditions. The complex exists as a monomer or a dimer and forms supercomplexes (SCs) in the inner mitochondrial membrane with a dimer of ubiquinol-cytochrome c oxidoreductase (cytochrome b-c1 complex, complex III, CIII), resulting in 2 different assemblies (supercomplexes III(2)IV and III(2)IV(2)).

It is found in the mitochondrion inner membrane. The protein operates within energy metabolism; oxidative phosphorylation. In terms of biological role, component of the cytochrome c oxidase, the last enzyme in the mitochondrial electron transport chain which drives oxidative phosphorylation. The respiratory chain contains 3 multisubunit complexes succinate dehydrogenase (complex II, CII), ubiquinol-cytochrome c oxidoreductase (cytochrome b-c1 complex, complex III, CIII) and cytochrome c oxidase (complex IV, CIV), that cooperate to transfer electrons derived from NADH and succinate to molecular oxygen, creating an electrochemical gradient over the inner membrane that drives transmembrane transport and the ATP synthase. Cytochrome c oxidase is the component of the respiratory chain that catalyzes the reduction of oxygen to water. Electrons originating from reduced cytochrome c in the intermembrane space (IMS) are transferred via the dinuclear copper A center (CU(A)) of COX2 and heme A of COX1 to the active site in COX1, a binuclear center (BNC) formed by heme A3 and copper B (CU(B)). The BNC reduces molecular oxygen to 2 water molecules using 4 electrons from cytochrome c in the IMS and 4 protons from the mitochondrial matrix. This chain is Cytochrome c oxidase subunit 5B, mitochondrial (COX5B), found in Saccharomyces cerevisiae (strain ATCC 204508 / S288c) (Baker's yeast).